Here is a 729-residue protein sequence, read N- to C-terminus: Fatty acid oxidation complex subunit alpha (729 aa).

The segment at 1 to 189 is enoyl-CoA hydratase/isomerase; that stretch reads MLYKGDTLYL…KIGLVDGVVK (189 aa). Residue Asp296 coordinates substrate. Residues 311-729 form a 3-hydroxyacyl-CoA dehydrogenase region; that stretch reads ETPKQAAVLG…ARPVGSLKTA (419 aa). NAD(+) contacts are provided by residues Met324, Asp343, 400–402, Lys407, and Ser429; that span reads VVE. His450 (for 3-hydroxyacyl-CoA dehydrogenase activity) is an active-site residue. Asn453 is an NAD(+) binding site. Positions 500 and 660 each coordinate substrate. Residues 708-729 are disordered; sequence RHNEPYYPPVEPARPVGSLKTA.

It in the N-terminal section; belongs to the enoyl-CoA hydratase/isomerase family. In the C-terminal section; belongs to the 3-hydroxyacyl-CoA dehydrogenase family. Heterotetramer of two alpha chains (FadB) and two beta chains (FadA).

It catalyses the reaction a (3S)-3-hydroxyacyl-CoA + NAD(+) = a 3-oxoacyl-CoA + NADH + H(+). The catalysed reaction is a (3S)-3-hydroxyacyl-CoA = a (2E)-enoyl-CoA + H2O. The enzyme catalyses a 4-saturated-(3S)-3-hydroxyacyl-CoA = a (3E)-enoyl-CoA + H2O. It carries out the reaction (3S)-3-hydroxybutanoyl-CoA = (3R)-3-hydroxybutanoyl-CoA. It catalyses the reaction a (3Z)-enoyl-CoA = a 4-saturated (2E)-enoyl-CoA. The catalysed reaction is a (3E)-enoyl-CoA = a 4-saturated (2E)-enoyl-CoA. Its pathway is lipid metabolism; fatty acid beta-oxidation. Its function is as follows. Involved in the aerobic and anaerobic degradation of long-chain fatty acids via beta-oxidation cycle. Catalyzes the formation of 3-oxoacyl-CoA from enoyl-CoA via L-3-hydroxyacyl-CoA. It can also use D-3-hydroxyacyl-CoA and cis-3-enoyl-CoA as substrate. The protein is Fatty acid oxidation complex subunit alpha of Salmonella agona (strain SL483).